Reading from the N-terminus, the 469-residue chain is Calcium-binding mitochondrial carrier protein SCaMC-2 (469 aa).

Residues Met1 to His189 are Mitochondrial intermembrane-facing. EF-hand domains lie at Thr47–Glu80, Asp78–Lys113, and Ile114–Glu149. 5 residues coordinate Ca(2+): Asp60, Asp62, Asp64, Gln66, and Glu71. 3 Solcar repeats span residues Gly184 to Leu270, Leu278 to Ala363, and Pro375 to Thr463. Residues Leu190–Leu207 traverse the membrane as a helical segment. Over Asp208–Arg244 the chain is Mitochondrial matrix. Residues Gly245 to Tyr264 form a helical membrane-spanning segment. The Mitochondrial intermembrane segment spans residues Glu265–Gly287. A helical membrane pass occupies residues Ser288 to Met301. Residues Glu302–Lys337 lie on the Mitochondrial matrix side of the membrane. A helical membrane pass occupies residues Gly338–Tyr357. The Mitochondrial intermembrane segment spans residues Glu358–Leu380. A helical transmembrane segment spans residues Leu381–Leu398. Residues Ala399–Arg437 lie on the Mitochondrial matrix side of the membrane. A helical membrane pass occupies residues Gly438–Tyr457. Topologically, residues Glu458–Arg469 are mitochondrial intermembrane.

Belongs to the mitochondrial carrier (TC 2.A.29) family.

The protein resides in the mitochondrion inner membrane. Calcium-dependent mitochondrial solute carrier. Mitochondrial solute carriers shuttle metabolites, nucleotides, and cofactors through the mitochondrial inner membrane. May act as a ATP-Mg/Pi exchanger that mediates the transport of Mg-ATP in exchange for phosphate, catalyzing the net uptake or efflux of adenine nucleotides into or from the mitochondria. The polypeptide is Calcium-binding mitochondrial carrier protein SCaMC-2 (SLC25A25) (Bos taurus (Bovine)).